The following is a 236-amino-acid chain: E3 ubiquitin-protein ligase RNF187 (236 aa).

The RING-type zinc-finger motif lies at 12–53 (CALCQRAPREPVRADCGHRFCRACVVRFWAEEDGPFPCPECA). An asymmetric dimethylarginine; by PRMT1 mark is found at Arg98 and Arg109. A Glycyl lysine isopeptide (Lys-Gly) (interchain with G-Cter in ubiquitin) cross-link involves residue Lys195. Ser200 carries the post-translational modification Phosphoserine. Residues Lys224 and Lys225 each participate in a glycyl lysine isopeptide (Lys-Gly) (interchain with G-Cter in ubiquitin) cross-link.

In terms of assembly, homodimer. Interacts with JUN, independently of JUN phosphorylation. Interacts (via C-terminus) with TRIM7. Post-translationally, ubiquitinated; undergoes 'Lys-48'-linked autoubiquitination in the absence of growth factors and MAP3K1-induced 'Lys-63'-linked polyubiquitination. 'Lys-48'-autoubiquitination leads to degradation by the proteasome, while MAP3K1-induced 'Lys-63'-linked polyubiquitination results in the stabilization of the protein. 'Lys-48'- and 'Lys-63'-linked polyubiquitinations occur most probably on the same 3 C-terminal lysine residues (Lys-195, Lys-224 and Lys-225) and are thus mutually exclusive. Other sites of ubiquitination are not excluded. 'Lys-63'-linked polyubiquitination by TRIM7 in response to growth factor signaling via the MEK/ERK pathway enhances protein stability. Arginine methylation by PRMT1 stabilizes RNF187 by facilitating K63-linked ubiquitin chain formation, and enables dimerization, c-Jun interaction and subsequent AP1 target gene expression.

It localises to the cytoplasm. The protein resides in the nucleus. It carries out the reaction S-ubiquitinyl-[E2 ubiquitin-conjugating enzyme]-L-cysteine + [acceptor protein]-L-lysine = [E2 ubiquitin-conjugating enzyme]-L-cysteine + N(6)-ubiquitinyl-[acceptor protein]-L-lysine.. It functions in the pathway protein modification; protein ubiquitination. Its function is as follows. E3 ubiquitin-protein ligase that acts as a coactivator of JUN-mediated gene activation in response to growth factor signaling via the MAP3K1 pathway, independently from MAPK8. This is E3 ubiquitin-protein ligase RNF187 (Rnf187) from Mus musculus (Mouse).